We begin with the raw amino-acid sequence, 202 residues long: Small ribosomal subunit protein uS4c (202 aa).

Positions 90–165 (MRLDNILFRL…SQKYKIPNHL (76 aa)) constitute an S4 RNA-binding domain.

The protein belongs to the universal ribosomal protein uS4 family. Part of the 30S ribosomal subunit. Contacts protein S5. The interaction surface between S4 and S5 is involved in control of translational fidelity.

It localises to the plastid. Its subcellular location is the chloroplast. Functionally, one of the primary rRNA binding proteins, it binds directly to 16S rRNA where it nucleates assembly of the body of the 30S subunit. Its function is as follows. With S5 and S12 plays an important role in translational accuracy. This chain is Small ribosomal subunit protein uS4c (rps4), found in Diphyscium foliosum (Nut-moss).